A 66-amino-acid chain; its full sequence is Gallinacin-5 (66 aa).

The first 19 residues, 1–19 (MQILTLLFAVLLLMLRAEP), serve as a signal peptide directing secretion. A propeptide spanning residues 20–25 (GLSLAR) is cleaved from the precursor. 3 disulfide bridges follow: C31–C59, C38–C53, and C43–C60.

This sequence belongs to the beta-defensin family. Strong expression in the tongue and bone marrow. Low expression in the esophagus, trachea, lung, brain and ovary. Expressed in the ovarian stroma, but not in the ovarian follicles.

It localises to the secreted. It is found in the cytoplasmic granule. Functionally, has bactericidal activity. In Gallus gallus (Chicken), this protein is Gallinacin-5 (GAL5).